A 220-amino-acid chain; its full sequence is Ras-related protein Rab-3A (220 aa).

Positions 31, 32, 33, 34, 35, 36, 37, 48, 49, 53, and 54 each coordinate GTP. Thr-36 is a Mg(2+) binding site. Residues 49 to 58 (PAFVSTVGID) carry the Switch 1 motif. Residues Thr-54 and Asp-77 each coordinate Mg(2+). A GTP-binding site is contributed by Gly-80. The Switch 2 motif lies at 80–96 (GQERYRTITTAYYRGAM). Position 86 is a phosphothreonine (Thr-86). Residues Asn-135, Lys-136, Asp-138, Ala-166, and Lys-167 each contribute to the GTP site. Ser-188 and Ser-190 each carry phosphoserine. Residues 194 to 220 (ADPAVTGAKQGPQLTDQQAPPHQDCAC) are disordered. 2 S-geranylgeranyl cysteine lipidation sites follow: Cys-218 and Cys-220. Position 220 is a cysteine methyl ester (Cys-220).

It belongs to the small GTPase superfamily. Rab family. In terms of assembly, interacts with RIMS1 and RIMS2. Interacts with Rabphilin-3A/RPH3A and Rab effector Noc2/RPH3AL. Interacts with SYTL4. Interacts with RAB3IP. Interacts with SGSM1 and SGSM3. Interacts with SYT1. Interacts with MYH9; this interaction is essential for lysosome exocytosis and plasma membrane repair. Interacts with STXBP1; this interaction promotes RAB3A dissociation from the vesicle membrane. Interacts with SNCA. Interacts with GDI1, GDI2, CHM and CHML; phosphorylation at Thr-86 disrupts these interactions. Interacts with MADD (via uDENN domain); the GTP-bound form is preferred for interaction. The cofactor is Mg(2+). Phosphorylation of Thr-86 in the switch II region by LRRK2 prevents the association of RAB regulatory proteins, including CHM, CHML and RAB GDP dissociation inhibitors GDI1 and GDI2.

It localises to the cytoplasm. Its subcellular location is the cytosol. The protein resides in the lysosome. It is found in the cytoplasmic vesicle. The protein localises to the secretory vesicle. It localises to the cell projection. Its subcellular location is the axon. The protein resides in the cell membrane. It is found in the presynapse. The protein localises to the postsynapse. It catalyses the reaction GTP + H2O = GDP + phosphate + H(+). Its activity is regulated as follows. Regulated by guanine nucleotide exchange factors (GEFs) including RAB3IL1 and MADD which promote the exchange of bound GDP for free GTP. Regulated by GTPase activating proteins (GAPs) including RAB3GAP1 and TBC1D10B which increase the GTP hydrolysis activity. Inhibited by GDP dissociation inhibitors (GDIs) which prevent Rab-GDP dissociation. The small GTPases Rab are key regulators of intracellular membrane trafficking, from the formation of transport vesicles to their fusion with membranes. Rabs cycle between an inactive GDP-bound form and an active GTP-bound form that is able to recruit to membranes different sets of downstream effectors directly responsible for vesicle formation, movement, tethering and fusion. RAB3A plays a central role in regulated exocytosis and secretion. Controls the recruitment, tethering and docking of secretory vesicles to the plasma membrane. Upon stimulation, switches to its active GTP-bound form, cycles to vesicles and recruits effectors such as RIMS1, RIMS2, Rabphilin-3A/RPH3A, RPH3AL or SYTL4 to help the docking of vesicules onto the plasma membrane. Upon GTP hydrolysis by GTPase-activating protein, dissociates from the vesicle membrane allowing the exocytosis to proceed. Stimulates insulin secretion through interaction with RIMS2 or RPH3AL effectors in pancreatic beta cells. Regulates calcium-dependent lysosome exocytosis and plasma membrane repair (PMR) via the interaction with 2 effectors, SYTL4 and myosin-9/MYH9. Acts as a positive regulator of acrosome content secretion in sperm cells by interacting with RIMS1. Also plays a role in the regulation of dopamine release by interacting with synaptotagmin I/SYT. The chain is Ras-related protein Rab-3A (RAB3A) from Sus scrofa (Pig).